A 566-amino-acid chain; its full sequence is Urease subunit alpha (566 aa).

Residues 128-566 (GGIDTHIHWI…LPMAQRYFLF (439 aa)) enclose the Urease domain. The Ni(2+) site is built by H133, H135, and K216. K216 is modified (N6-carboxylysine). H218 contributes to the substrate binding site. Residues H245 and H271 each coordinate Ni(2+). The active-site Proton donor is the H319. D359 provides a ligand contact to Ni(2+).

The protein belongs to the metallo-dependent hydrolases superfamily. Urease alpha subunit family. In terms of assembly, heterotrimer of UreA (gamma), UreB (beta) and UreC (alpha) subunits. Three heterotrimers associate to form the active enzyme. Requires Ni cation as cofactor. In terms of processing, carboxylation allows a single lysine to coordinate two nickel ions.

It localises to the cytoplasm. It catalyses the reaction urea + 2 H2O + H(+) = hydrogencarbonate + 2 NH4(+). The protein operates within nitrogen metabolism; urea degradation; CO(2) and NH(3) from urea (urease route): step 1/1. This chain is Urease subunit alpha, found in Acinetobacter baylyi (strain ATCC 33305 / BD413 / ADP1).